The chain runs to 521 residues: Occludin (521 aa).

The tract at residues 1–20 is disordered; the sequence is MSVRPFESPPPYRPDEFKPN. Residues 1-66 lie on the Cytoplasmic side of the membrane; sequence MSVRPFESPP…KWTSPPGVIR (66 aa). The MARVEL domain occupies 60-267; sequence SPPGVIRILS…IIFFAVKTRR (208 aa). A helical membrane pass occupies residues 67–89; sequence ILSMLIIVMCIAIFACVASTLAW. The Extracellular portion of the chain corresponds to 90–133; the sequence is DRGYGTGLFGGSLNYPYSGFGYGGGYGGGYGGYGYGYGGYTDPR. Residues 134-158 traverse the membrane as a helical segment; that stretch reads AAKGFLLAMAAFCFIASLVIFVTSV. Topologically, residues 159 to 168 are cytoplasmic; the sequence is IRSGMSRTRR. Residues 169–193 traverse the membrane as a helical segment; that stretch reads YYLIVIIVSAILGIMVFIATIVYIM. The Extracellular portion of the chain corresponds to 194-241; sequence GVNPTAQASGSMYGSQIYMICNQFYTPGGTGLYVDQYLYHYCVVDPQE. The cysteines at positions 214 and 235 are disulfide-linked. A helical transmembrane segment spans residues 242–263; it reads AIAIVLGFMIIVAFALIIFFAV. Topologically, residues 264–521 are cytoplasmic; it reads KTRRKMDRYD…MVGDYDRRKP (258 aa). The residue at position 300 (serine 300) is a Phosphoserine. Residues 300-329 are disordered; the sequence is SAGTQDMPPPPSDYAERVDSPMAYSSNGKV. Residue threonine 303 is modified to Phosphothreonine. Phosphoserine is present on residues serine 311 and serine 319. Serine 338 carries the post-translational modification Phosphoserine; by PKC; in vitro. Serine 358 carries the post-translational modification Phosphoserine. Positions 361-405 are disordered; that stretch reads DFRQPRYSSNGNLETPSKRAPTKGKAGKGKRTDPDHYETDYTTGG. Residues 366–375 show a composition bias toward polar residues; the sequence is RYSSNGNLET. At tyrosine 367 the chain carries Phosphotyrosine. Phosphoserine is present on residues serine 368 and serine 369. Over residues 380-389 the composition is skewed to basic residues; it reads APTKGKAGKG. The span at 390–399 shows a compositional bias: basic and acidic residues; sequence KRTDPDHYET. Tyrosine 397 and tyrosine 401 each carry phosphotyrosine. Position 402 is a phosphothreonine; by PKC/PRKCH (threonine 402). Residue threonine 403 is modified to Phosphothreonine. Serine 407 is subject to Phosphoserine. One can recognise an OCEL domain in the interval 413-521; that stretch reads EDWVREYPPI…MVGDYDRRKP (109 aa). A coiled-coil region spans residues 424–488; that stretch reads SDQQRQLYKR…EYNRLKQVKG (65 aa). Position 489 is a phosphoserine (serine 489).

The protein belongs to the ELL/occludin family. As to quaternary structure, interacts with TJP1/ZO1. Interacts with VAPA. Interacts with CLDN1, CLDN6, CLDN9, CLDN11, CLDN12 and CLDN17. Interacts with PLSCR1. Interacts with LSR, ILDR1 and ILDR2. Interacts with TJP2/ZO2. In terms of processing, dephosphorylated by PTPRJ. May be phosphorylated by PKC during translocation to cell-cell contacts. Localized at tight junctions of both epithelial and endothelial cells. Highly expressed in the testis, kidney, lung, liver and brain. Not detected in skeletal muscle, spleen and heart.

It is found in the cell membrane. The protein localises to the cell junction. The protein resides in the tight junction. Its function is as follows. May play a role in the formation and regulation of the tight junction (TJ) paracellular permeability barrier. The protein is Occludin (Ocln) of Mus musculus (Mouse).